A 362-amino-acid chain; its full sequence is 3-dehydroquinate synthase (362 aa).

Residues 74-79 (DGEGYK), 108-112 (GVIGD), 132-133 (TT), lysine 145, lysine 154, and 172-175 (TLDT) contribute to the NAD(+) site. Positions 187, 250, and 267 each coordinate Zn(2+).

Belongs to the sugar phosphate cyclases superfamily. Dehydroquinate synthase family. The cofactor is Co(2+). Zn(2+) is required as a cofactor. Requires NAD(+) as cofactor.

It localises to the cytoplasm. It catalyses the reaction 7-phospho-2-dehydro-3-deoxy-D-arabino-heptonate = 3-dehydroquinate + phosphate. It participates in metabolic intermediate biosynthesis; chorismate biosynthesis; chorismate from D-erythrose 4-phosphate and phosphoenolpyruvate: step 2/7. Catalyzes the conversion of 3-deoxy-D-arabino-heptulosonate 7-phosphate (DAHP) to dehydroquinate (DHQ). In Geobacter sp. (strain M21), this protein is 3-dehydroquinate synthase.